The primary structure comprises 166 residues: MAKTLSKSSGGALAPWLGISLIVILFDQLTKIAVLKTFAYGAMHALTPFFNLTLIYNRGAAFGFLATAGGWQRWAFTALGIGATLVICYLLKRHGHQRLFSLSLALILGGALGNVIDRLIYGHVIDFLDFHVGAWHWPAFNLADSAITVGAVLLIYDELRRVRGAR.

4 helical membrane passes run 10–30 (GGALAPWLGISLIVILFDQLT), 32–52 (IAVLKTFAYGAMHALTPFFNL), 71–91 (WQRWAFTALGIGATLVICYLL), and 100–120 (FSLSLALILGGALGNVIDRLI). Catalysis depends on residues Asp-126 and Asp-144. Residues 135-155 (WHWPAFNLADSAITVGAVLLI) traverse the membrane as a helical segment.

It belongs to the peptidase A8 family.

It is found in the cell inner membrane. The enzyme catalyses Release of signal peptides from bacterial membrane prolipoproteins. Hydrolyzes -Xaa-Yaa-Zaa-|-(S,diacylglyceryl)Cys-, in which Xaa is hydrophobic (preferably Leu), and Yaa (Ala or Ser) and Zaa (Gly or Ala) have small, neutral side chains.. The protein operates within protein modification; lipoprotein biosynthesis (signal peptide cleavage). Functionally, this protein specifically catalyzes the removal of signal peptides from prolipoproteins. The polypeptide is Lipoprotein signal peptidase (Burkholderia mallei (strain ATCC 23344)).